Reading from the N-terminus, the 564-residue chain is NAD-dependent malic enzyme (564 aa).

Tyrosine 104 functions as the Proton donor in the catalytic mechanism. Position 157 (arginine 157) interacts with NAD(+). Lysine 175 functions as the Proton acceptor in the catalytic mechanism. The a divalent metal cation site is built by glutamate 246, aspartate 247, and aspartate 270. Residues aspartate 270 and asparagine 417 each contribute to the NAD(+) site.

Belongs to the malic enzymes family. As to quaternary structure, homotetramer. Mg(2+) serves as cofactor. The cofactor is Mn(2+).

The enzyme catalyses (S)-malate + NAD(+) = pyruvate + CO2 + NADH. It catalyses the reaction oxaloacetate + H(+) = pyruvate + CO2. This chain is NAD-dependent malic enzyme, found in Aeromonas salmonicida (strain A449).